A 185-amino-acid chain; its full sequence is Ribosome-recycling factor (185 aa).

The protein belongs to the RRF family.

It localises to the cytoplasm. In terms of biological role, responsible for the release of ribosomes from messenger RNA at the termination of protein biosynthesis. May increase the efficiency of translation by recycling ribosomes from one round of translation to another. The polypeptide is Ribosome-recycling factor (Enterobacter sp. (strain 638)).